A 1411-amino-acid chain; its full sequence is Alpha-latroinsectotoxin-Lt1a (1411 aa).

Positions 1–35 (ACSSPEVSIFHFFVYAGSFVKNFKKMKGSSAISKR) are excised as a propeptide. The segment at 245–264 (ALYALFYGTETFISIMFYLV) is helix H8 is the probable transmembrane region of the tetrameric pore inserted in the target cell membrane. 20 ANK repeats span residues 462-495 (DIHR…NVSE), 499-528 (LGRG…NLLE), 533-562 (NGYT…DVNV), 567-597 (DLFT…DLNA), 601-630 (SGFT…VINI), 634-663 (VGLT…YLND), 667-697 (NGMT…NINA), 702-732 (KKWT…NIRL), 736-765 (GGIN…DVTR), 769-798 (KGFS…NVND), 802-831 (SGVT…DIKA), 835-864 (NSQM…SLMN), 869-898 (RNEY…NVNE), 902-931 (NGNT…NFRL), 935-965 (ERKT…NLQA), 968-999 (RGKT…LNES), 1000-1029 (ECNP…NPAE), 1080-1109 (QENT…DPNQ), 1112-1142 (DGDP…DINT), and 1146-1175 (ERFT…DVNA). Positions 1196–1411 (QSSRFLRSGH…KVNSNVSQIK (216 aa)) are excised as a propeptide. The segment covering 1230 to 1249 (DKLTQQISSKGTRSDSNSTE) has biased composition (polar residues). The interval 1230–1254 (DKLTQQISSKGTRSDSNSTEGKMHS) is disordered. The stretch at 1331–1361 (NVHSKIYKAIMSGRRSVISEMLCSFAEEYSK) is one ANK 21 repeat.

Belongs to the cationic peptide 01 (latrotoxin) family. 02 (alpha-latroinsectotoxin) subfamily. Homotetramer in membranes. Expressed by the venom gland.

Its subcellular location is the secreted. The protein localises to the target cell membrane. In terms of biological role, insecticidal presynaptic neurotoxin that induces massive neurotransmitter release at insect (but not vertebrate) neuromuscular junctions. Native toxin forms cation-permeable pores (with high permeability to calcium) in lipid membranes locust muscle membrane and artificial lipid bilayers. May bind to insect neurexin-1 homolog, insect adhesion G protein-coupled receptor L1 homolog, and insect receptor-type tyrosine-protein phosphatase S homolog, and induces neurotransmitter exocytosis both by forming tetrameric pores in membranes and signaling via G protein-coupled receptor. Oligomerization is a process independent of divalent cations. The toxin forms channels with 0.55-0.58 nm entrance diameter and a relatively small conductance in planar phospholipid membranes. The sequence is that of Alpha-latroinsectotoxin-Lt1a from Latrodectus tredecimguttatus (Mediterranean black widow spider).